The chain runs to 803 residues: MIPVTEFRQFSEQQPAFRVLKPWWDVFTDYLSVAMLMIGVFGCTLQVMQDKIICLPKRVQPSQNQSSVSNVSQAVASTTPLPPPKPSPSNPVTVEMKGLKTDLDLQQYSFINQMCYERALHWYAKYFPYLVLIHTLVFMLCSNFWFKFPGSSSKIEHFISILGKCFDSPWTTRALSEVSGEDSEEKDNRKNNMSRSNTTQSGPEGSLVNSQSLKSIPEKFVVDKSTAGALDKKEGEQAKALFEKVKKFRLHVEEGDILYAMYVRQTVLKVIKFLIIIAYNSALVSKVQFTVDCNVDIQDMTGYKNFSCNHTMAHLFSKLSFCYLCFVSIYGLTCLYTLYWLFYRSLKEYSFEYVRQETGIDDIPDVKNDFAFMLHMIDQYDPLYSKRFAVFLSEVSENKLKQLNLNNEWTPDKLRQKLQTNAHNRLELPLIMLSGLPDTVFEITELQSLKLEIIKNVMIPATIAQLDNLQELSLHQCSVKIHSAALSFLKENLKVLSVKFDDMRELPPWMYGLRNLEELYLVGSLSHDISRNVTLESLRDLKSLKILSIKSNVSKIPQAVVDVSSHLQKMCIHNDGTKLVMLNNLKKMTNLTELELVHCDLERIPHAVFSLLSLQELDLKENNLKSIEEIVSFQHLRKLTVLKLWHNSITYIPEHIKKLTSLERLSFSHNKIEVLPSHLFLCNKIRYLDLSYNDIRFIPPEIGVLQSLQYFSITCNKVESLPDELYFCKKLKTLKIGKNSLSVLSPKIGNLLFLSYLDVKGNHFEILPPELGDCRALKRAGLVVEDALFETLPSDVREQMKTE.

At 1–22 (MIPVTEFRQFSEQQPAFRVLKP) the chain is on the cytoplasmic side. The helical transmembrane segment at 23–43 (WWDVFTDYLSVAMLMIGVFGC) threads the bilayer. At 44-125 (TLQVMQDKII…YERALHWYAK (82 aa)) the chain is on the extracellular side. Disulfide bonds link Cys54/Cys308 and Cys115/Cys293. N-linked (GlcNAc...) asparagine glycans are attached at residues Asn64 and Asn70. Residues 126-146 (YFPYLVLIHTLVFMLCSNFWF) traverse the membrane as a helical segment. Residues 147–266 (KFPGSSSKIE…ILYAMYVRQT (120 aa)) are Cytoplasmic-facing. Positions 177-209 (EVSGEDSEEKDNRKNNMSRSNTTQSGPEGSLVN) are disordered. The segment covering 191-209 (NNMSRSNTTQSGPEGSLVN) has biased composition (polar residues). Phosphoserine is present on residues Ser212 and Ser215. A helical transmembrane segment spans residues 267–287 (VLKVIKFLIIIAYNSALVSKV). The Extracellular segment spans residues 288–320 (QFTVDCNVDIQDMTGYKNFSCNHTMAHLFSKLS). Residues 321 to 341 (FCYLCFVSIYGLTCLYTLYWL) form a helical membrane-spanning segment. At 342–803 (FYRSLKEYSF…SDVREQMKTE (462 aa)) the chain is on the cytoplasmic side. LRR repeat units lie at residues 397-419 (ENKL…QKLQ), 420-443 (TNAH…VFEI), 446-465 (LQSL…TIAQ), 468-490 (NLQE…SFLK), 492-513 (NLKV…MYGL), 515-536 (NLEE…VTLE), 543-563 (SLKI…VVDV), 566-586 (HLQK…NNLK), 590-611 (NLTE…VFSL), 613-634 (SLQE…VSFQ), 638-659 (KLTV…IKKL), 661-682 (SLER…LFLC), 684-705 (KIRY…IGVL), 707-728 (SLQY…LYFC), 730-751 (KLKT…IGNL), 753-774 (FLSY…LGDC), and 776-799 (ALKR…VREQ).

It belongs to the LRRC8 family. Heterohexamer; oligomerizes with other LRRC8 proteins (LRRC8A, LRRC8B, LRRC8D and/or LRRC8E) to form a heterohexamer. Homoheptamer; inactive, likely because it is not targeted to the plasma membrane in the absence of LRRC8A. In vivo, the subunit composition may depend primarily on expression levels, and heterooligomeric channels containing various proportions of the different LRRC8 proteins may coexist.

It localises to the cell membrane. The protein localises to the endoplasmic reticulum membrane. It catalyses the reaction chloride(in) = chloride(out). The enzyme catalyses iodide(out) = iodide(in). The catalysed reaction is taurine(out) = taurine(in). It carries out the reaction 2',3'-cGAMP(out) = 2',3'-cGAMP(in). Its function is as follows. Non-essential component of the volume-regulated anion channel (VRAC, also named VSOAC channel), an anion channel required to maintain a constant cell volume in response to extracellular or intracellular osmotic changes. The VRAC channel conducts iodide better than chloride and can also conduct organic osmolytes like taurine. Plays a redundant role in the efflux of amino acids, such as aspartate and glutamate, in response to osmotic stress. The VRAC channel also mediates transport of immunoreactive cyclic dinucleotide GMP-AMP (2'-3'-cGAMP), an immune messenger produced in response to DNA virus in the cytosol. Channel activity requires LRRC8A plus at least one other family member (LRRC8B, LRRC8C, LRRC8D or LRRC8E); channel characteristics depend on the precise subunit composition. The polypeptide is Volume-regulated anion channel subunit LRRC8C (Bos taurus (Bovine)).